The following is a 202-amino-acid chain: MKEYNIVITGVGGQGILTAANLLGWAALRAGYKVRVGEVHGMSQRFGSVIAYVRFGEDVYGAMVPEGKADVILSFEPVEALRYINYLKKGGLVFTNARPIPPVQVSMGLATYPTLDEMKKIVEEDFGGKFMAFDAEKLAMEAGNIVTTNVVLIGALSQTPGFPLSEEQIKEVIRISVPPKTIDVNMRAFELGVKAAKEMLGL.

As to quaternary structure, heterodimer of the IorA and IorB subunits.

It catalyses the reaction indole-3-pyruvate + 2 oxidized [2Fe-2S]-[ferredoxin] + CoA = (indol-3-yl)acetyl-CoA + 2 reduced [2Fe-2S]-[ferredoxin] + CO2 + H(+). Its function is as follows. Catalyzes the ferredoxin-dependent oxidative decarboxylation of arylpyruvates. The chain is Indolepyruvate oxidoreductase subunit IorB (iorB) from Thermococcus kodakarensis (strain ATCC BAA-918 / JCM 12380 / KOD1) (Pyrococcus kodakaraensis (strain KOD1)).